The following is a 309-amino-acid chain: Glutaminase (309 aa).

7 residues coordinate substrate: S64, N114, E160, N167, Y191, Y243, and V261.

This sequence belongs to the glutaminase family. As to quaternary structure, homotetramer.

It catalyses the reaction L-glutamine + H2O = L-glutamate + NH4(+). The chain is Glutaminase from Methylorubrum extorquens (strain PA1) (Methylobacterium extorquens).